Here is a 183-residue protein sequence, read N- to C-terminus: ATP synthase subunit b, chloroplastic (183 aa).

A helical transmembrane segment spans residues 27 to 49 (LATNLINLTVVVGVLIFFGKGVL).

The protein belongs to the ATPase B chain family. As to quaternary structure, F-type ATPases have 2 components, F(1) - the catalytic core - and F(0) - the membrane proton channel. F(1) has five subunits: alpha(3), beta(3), gamma(1), delta(1), epsilon(1). F(0) has four main subunits: a(1), b(1), b'(1) and c(10-14). The alpha and beta chains form an alternating ring which encloses part of the gamma chain. F(1) is attached to F(0) by a central stalk formed by the gamma and epsilon chains, while a peripheral stalk is formed by the delta, b and b' chains.

It localises to the plastid. The protein resides in the chloroplast thylakoid membrane. F(1)F(0) ATP synthase produces ATP from ADP in the presence of a proton or sodium gradient. F-type ATPases consist of two structural domains, F(1) containing the extramembraneous catalytic core and F(0) containing the membrane proton channel, linked together by a central stalk and a peripheral stalk. During catalysis, ATP synthesis in the catalytic domain of F(1) is coupled via a rotary mechanism of the central stalk subunits to proton translocation. In terms of biological role, component of the F(0) channel, it forms part of the peripheral stalk, linking F(1) to F(0). The protein is ATP synthase subunit b, chloroplastic of Brachypodium distachyon (Purple false brome).